A 305-amino-acid polypeptide reads, in one-letter code: tRNA dimethylallyltransferase (305 aa).

Residue 14–21 (GPTTSGKT) coordinates ATP. Residue 16-21 (TTSGKT) coordinates substrate. Interaction with substrate tRNA regions lie at residues 39-42 (DSAL), 163-167 (QRITR), and 243-248 (RCVGYR).

Belongs to the IPP transferase family. Monomer. Requires Mg(2+) as cofactor.

The enzyme catalyses adenosine(37) in tRNA + dimethylallyl diphosphate = N(6)-dimethylallyladenosine(37) in tRNA + diphosphate. In terms of biological role, catalyzes the transfer of a dimethylallyl group onto the adenine at position 37 in tRNAs that read codons beginning with uridine, leading to the formation of N6-(dimethylallyl)adenosine (i(6)A). The chain is tRNA dimethylallyltransferase from Ruthia magnifica subsp. Calyptogena magnifica.